Here is a 2280-residue protein sequence, read N- to C-terminus: Metacaspase-3 (2280 aa).

Disordered stretches follow at residues 56–83, 202–284, 791–819, 931–954, 994–1015, 1278–1306, and 1469–1500; these read ILSK…DRED, YSTE…THRG, YKNS…MVNN, DDNS…RYDK, SGKY…DDSE, KTNN…NPFI, and KAPT…NANA. Basic and acidic residues predominate over residues 63 to 83; it reads NKNENIKKRINEKDNDTDRED. Composition is skewed to polar residues over residues 205–219 and 228–278; these read EHTQ…TSKR and DKAQ…NRKG. Low complexity-rich tracts occupy residues 793–819 and 931–941; these read NSMN…MVNN and DDNSVQDSFFS. Low complexity-rich tracts occupy residues 1278-1303 and 1482-1500; these read KTNN…NNSN and APTN…NANA.

Belongs to the peptidase C14B family.

Functionally, protease that cleaves specifically after arginine or lysine residues. This chain is Metacaspase-3, found in Plasmodium falciparum (isolate 3D7).